Consider the following 396-residue polypeptide: L-cysteine desulfidase (396 aa).

Cys23 acts as the Proton acceptor in catalysis. Residues Cys287, Cys329, and Cys336 each coordinate [4Fe-4S] cluster.

Belongs to the L-cysteine desulfidase family. Homotrimer. It depends on [4Fe-4S] cluster as a cofactor.

It catalyses the reaction L-cysteine + H2O = hydrogen sulfide + pyruvate + NH4(+) + H(+). Catalyzes the cleavage of L-cysteine to form 2-aminoprop-2-enoate and sulfide. The former then spontaneously hydrolyzes to pyruvate and NH(3). May be responsible for the production of sulfide required for the biosynthesis of iron-sulfur centers in this archaea. The sequence is that of L-cysteine desulfidase from Methanococcus maripaludis (strain DSM 14266 / JCM 13030 / NBRC 101832 / S2 / LL).